The sequence spans 257 residues: UPF0246 protein Ent638_0568 (257 aa).

The protein belongs to the UPF0246 family.

This is UPF0246 protein Ent638_0568 from Enterobacter sp. (strain 638).